The primary structure comprises 366 residues: Chorismate synthase (366 aa).

Residues Arg47 and Arg53 each contribute to the NADP(+) site. Residues 124–126 (RSS), Gly286, 301–305 (KPTAT), and Arg327 each bind FMN.

Belongs to the chorismate synthase family. In terms of assembly, homotetramer. It depends on FMNH2 as a cofactor.

It carries out the reaction 5-O-(1-carboxyvinyl)-3-phosphoshikimate = chorismate + phosphate. It functions in the pathway metabolic intermediate biosynthesis; chorismate biosynthesis; chorismate from D-erythrose 4-phosphate and phosphoenolpyruvate: step 7/7. Its function is as follows. Catalyzes the anti-1,4-elimination of the C-3 phosphate and the C-6 proR hydrogen from 5-enolpyruvylshikimate-3-phosphate (EPSP) to yield chorismate, which is the branch point compound that serves as the starting substrate for the three terminal pathways of aromatic amino acid biosynthesis. This reaction introduces a second double bond into the aromatic ring system. The polypeptide is Chorismate synthase (Microcystis aeruginosa (strain NIES-843 / IAM M-2473)).